Reading from the N-terminus, the 638-residue chain is Factor of DNA methylation 3 (638 aa).

The stretch at 318 to 497 (FNRIFADHEK…RALISNLRDM (180 aa)) forms a coiled coil.

In terms of biological role, acts in association with FDM4 and FDM5 for RNA-directed DNA methylation (RdDM). The chain is Factor of DNA methylation 3 from Arabidopsis thaliana (Mouse-ear cress).